The chain runs to 255 residues: Putative cysteine-rich repeat secretory protein 27 (255 aa).

The first 26 residues, 1–26 (MISKFGSVHILAVVAIQLLIIPSVSS), serve as a signal peptide directing secretion. Gnk2-homologous domains are found at residues 33–135 (YLHH…TINS) and 141–252 (YEND…LYPF).

It belongs to the cysteine-rich repeat secretory protein family.

The protein resides in the secreted. This is Putative cysteine-rich repeat secretory protein 27 (CRRSP27) from Arabidopsis thaliana (Mouse-ear cress).